We begin with the raw amino-acid sequence, 588 residues long: Interferon-activable protein 208 (588 aa).

In terms of domain architecture, Pyrin spans 5–92; the sequence is MVNYYKQIVL…VDILRKEMEK (88 aa). Disordered regions lie at residues 157–183 and 469–526; these read ATST…SLQT and EMQN…RRVN. Polar residues-rich tracts occupy residues 172-183 and 470-487; these read RFPTTASSSLQT and MQNP…QPRL.

Belongs to the HIN-200 family.

This chain is Interferon-activable protein 208, found in Mus musculus (Mouse).